Reading from the N-terminus, the 359-residue chain is Carbamoyl phosphate synthase arginine-specific small chain (359 aa).

The CPSase stretch occupies residues 1–168; sequence MKAYLVLATG…VETFEGNGPH (168 aa). L-glutamine is bound by residues S45, G216, and G218. Residues 168-355 form the Glutamine amidotransferase type-1 domain; it reads HIVLIDYGFK…IDDVAAKGRE (188 aa). C243 (nucleophile) is an active-site residue. L244, Q247, N285, and Y288 together coordinate L-glutamine. Active-site residues include H328 and E330.

The protein belongs to the CarA family. Composed of two chains; the small (or glutamine) chain promotes the hydrolysis of glutamine to ammonia, which is used by the large (or ammonia) chain to synthesize carbamoyl phosphate. Tetramer of heterodimers (alpha,beta)4.

The enzyme catalyses hydrogencarbonate + L-glutamine + 2 ATP + H2O = carbamoyl phosphate + L-glutamate + 2 ADP + phosphate + 2 H(+). It catalyses the reaction L-glutamine + H2O = L-glutamate + NH4(+). The protein operates within amino-acid biosynthesis; L-arginine biosynthesis; carbamoyl phosphate from bicarbonate: step 1/1. Small subunit of the glutamine-dependent carbamoyl phosphate synthetase (CPSase). CPSase catalyzes the formation of carbamoyl phosphate from the ammonia moiety of glutamine, carbonate, and phosphate donated by ATP, constituting the first step of the biosynthetic pathway leading to arginine and/or urea. The small subunit (glutamine amidotransferase) binds and cleaves glutamine to supply the large subunit with the substrate ammonia. This Halalkalibacterium halodurans (strain ATCC BAA-125 / DSM 18197 / FERM 7344 / JCM 9153 / C-125) (Bacillus halodurans) protein is Carbamoyl phosphate synthase arginine-specific small chain.